A 284-amino-acid chain; its full sequence is Trimeric intracellular cation channel type B-B (284 aa).

Residues 1–15 (MESLSEVSVQFSQLS) lie on the Lumenal side of the membrane. The chain crosses the membrane as a helical span at residues 16 to 32 (MFPFFDMAHYLASVMSA). At 33 to 44 (REQAGALDIASH) the chain is on the cytoplasmic side. A helical membrane pass occupies residues 45 to 68 (SPMASWFSAMLHCFGGGILSSILL). Residues 69–79 (AEPPVGILANT) are Lumenal-facing. The chain crosses the membrane as a helical span at residues 80–99 (TNIMLASAIWYMVYYFPYDL). Over 100 to 102 (FYN) the chain is Cytoplasmic. The chain crosses the membrane as a helical span at residues 103-121 (CFFFLPIRLIAAGMKEVTR). A 1,2-diacyl-sn-glycero-3-phospho-(1D-myo-inositol-4,5-bisphosphate)-binding residues include K117 and R121. Residues 122–139 (TWKILSGITHAHSHYKDA) are Lumenal-facing. A helical transmembrane segment spans residues 140–157 (WLVMITIGWARGAGGGLI). At 158 to 178 (SNFEQLVRGVWKPESNEFLKM) the chain is on the cytoplasmic side. Residues 179–196 (SYPVKVTLIGAVLFTLQH) traverse the membrane as a helical segment. At 197-204 (GHYLPISR) the chain is on the lumenal side. The helical transmembrane segment at 205–225 (HNLMFIYTMFLVSIKVTMMLT) threads the bilayer. Topologically, residues 226–284 (HSAGSPFLPLETPLHRILFGLRQNQAEVRESPSSSGAKGKPSKKTLDKDSGEQSNKKDK) are cytoplasmic. Positions 250 to 284 (QAEVRESPSSSGAKGKPSKKTLDKDSGEQSNKKDK) are disordered. Over residues 269-284 (KTLDKDSGEQSNKKDK) the composition is skewed to basic and acidic residues.

Belongs to the TMEM38 family. Homotrimer; conformation seems to be controled by binding to diacylglycerol (DAG).

The protein resides in the endoplasmic reticulum membrane. It carries out the reaction K(+)(in) = K(+)(out). Its activity is regulated as follows. Channel activity is activated by increased cytosolic Ca(2+) levels and blocked by luminal high Ca(2+) levels. Intracellular monovalent cation channel required for maintenance of rapid intracellular calcium release. Acts as a potassium counter-ion channel that functions in synchronization with calcium release from intracellular stores. Activated by increased cytosolic Ca(2+) levels. The sequence is that of Trimeric intracellular cation channel type B-B (tmem38b-b) from Xenopus laevis (African clawed frog).